The following is a 1637-amino-acid chain: Surface protein (1637 aa).

Positions 1-48 (MNKNSKKKLDFLPNKLNKYSIRRFTVGTASILVGATLIFGVANDQAEA) are cleaved as a signal peptide. Disordered stretches follow at residues 49–305 (AENN…RTQV), 689–719 (VQKG…GEPT), and 739–1611 (PQGH…NGTL). The segment covering 56-65 (KQDDSSDASK) has biased composition (basic and acidic residues). A compositionally biased stretch (polar residues) spans 69-83 (NVQTIEQSSANSNES). 3 stretches are compositionally biased toward basic and acidic residues: residues 90–106 (DVTK…EKAN), 127–180 (EAPK…KATT), and 188–264 (ETSK…KVET). Residues 289–298 (AKSNSNAQPS) show a composition bias toward polar residues. 5 G5 domains span residues 654–737 (QADL…TPEE), 783–865 (HGPK…GGEE), 911–993 (HGPK…GGEE), 1039–1121 (HGPK…GGEE), and 1167–1250 (HGPK…APEI). The segment covering 779 to 817 (DVTKHGPKAGEPEVTKEEIPFEKKREFNPDLKPGEEKVT) has biased composition (basic and acidic residues). A compositionally biased stretch (low complexity) spans 818–832 (QEGQTGEKTTTTPTT). Residues 907–945 (DVTKHGPKAGEPEVTKEEIPFEKKREFNPDLKPGEEKVT) are compositionally biased toward basic and acidic residues. Residues 946-960 (QEGQTGEKTTTTPTT) show a composition bias toward low complexity. Positions 1035 to 1073 (DVTKHGPKAGEPEVTKEEIPFEKKREFNPDLKPGEEKVT) are enriched in basic and acidic residues. Over residues 1074–1088 (QEGQTGEKTTTTPTT) the composition is skewed to low complexity. The segment covering 1163-1189 (DVTKHGPKAGEPEVTKEEIPYETKRVL) has biased composition (basic and acidic residues). Composition is skewed to acidic residues over residues 1282 to 1291 (TGEIIEEPQD) and 1302 to 1580 (SDAD…DSDS). 141 tandem repeats follow at residues 1301–1302 (DS), 1303–1304 (DA), 1305–1306 (DS), 1307–1308 (DS), 1309–1310 (DA), 1311–1312 (DS), 1313–1314 (DS), 1315–1316 (DA), 1317–1318 (DS), 1319–1320 (DS), 1321–1322 (DA), 1323–1324 (DS), 1325–1326 (DS), 1327–1328 (DA), 1329–1330 (DS), 1331–1332 (DS), 1333–1334 (DS), 1335–1336 (DS), 1337–1338 (DS), 1339–1340 (DS), 1341–1342 (DS), 1343–1344 (DS), 1345–1346 (DA), 1347–1348 (DS), 1349–1350 (DS), 1351–1352 (DS), 1353–1354 (DS), 1355–1356 (DS), 1357–1358 (DA), 1359–1360 (DS), 1361–1362 (DS), 1363–1364 (DA), 1365–1366 (DS), 1367–1368 (DS), 1369–1370 (DA), 1371–1372 (DS), 1373–1374 (DS), 1375–1376 (DS), 1377–1378 (DA), 1379–1380 (DS), 1381–1382 (DS), 1383–1384 (DS), 1385–1386 (DA), 1387–1388 (DS), 1389–1390 (DS), 1391–1392 (DS), 1393–1394 (DS), 1395–1396 (DS), 1397–1398 (DA), 1399–1400 (DS), 1401–1402 (DS), 1403–1404 (DS), 1405–1406 (DS), 1407–1408 (DS), 1409–1410 (DA), 1411–1412 (DS), 1413–1414 (DS), 1415–1416 (DA), 1417–1418 (DS), 1419–1420 (DS), 1421–1422 (DS), 1423–1424 (DS), 1425–1426 (DS), 1427–1428 (DA), 1429–1430 (DS), 1431–1432 (DS), 1433–1434 (DS), 1435–1436 (DS), 1437–1438 (DS), 1439–1440 (DA), 1441–1442 (DS), 1443–1444 (DS), 1445–1446 (DA), 1447–1448 (DS), 1449–1450 (DS), 1451–1452 (DA), 1453–1454 (DS), 1455–1456 (DS), 1457–1458 (DA), 1459–1460 (DS), 1461–1462 (DS), 1463–1464 (DS), 1465–1466 (DS), 1467–1468 (DS), 1469–1470 (DA), 1471–1472 (DS), 1473–1474 (DS), 1475–1476 (DA), 1477–1478 (DS), 1479–1480 (DS), 1481–1482 (DA), 1483–1484 (DS), 1485–1486 (DS), 1487–1488 (DA), 1489–1490 (DS), 1491–1492 (DS), 1493–1494 (DS), 1495–1496 (DS), 1497–1498 (DS), 1499–1500 (DA), 1501–1502 (DS), 1503–1504 (DS), 1505–1506 (DS), 1507–1508 (DS), 1509–1510 (DS), 1511–1512 (DS), 1513–1514 (DA), 1515–1516 (DS), 1517–1518 (DS), 1519–1520 (DA), 1521–1522 (DS), 1523–1524 (DS), 1525–1526 (DS), 1527–1528 (DA), 1529–1530 (DS), 1531–1532 (DS), 1533–1534 (DA), 1535–1536 (DS), 1537–1538 (DS), 1539–1540 (DA), 1541–1542 (DG), 1543–1544 (DS), 1545–1546 (DA), 1547–1548 (DS), 1549–1550 (DS), 1551–1552 (DA), 1553–1554 (DS), 1555–1556 (DS), 1557–1558 (DS), 1559–1560 (DS), 1561–1562 (DS), 1563–1564 (DS), 1565–1566 (DS), 1567–1568 (DS), 1569–1570 (DA), 1571–1572 (DS), 1573–1574 (DS), 1575–1576 (DS), 1577–1578 (DS), 1579–1580 (DS), and 1581–1582 (DA). Residues 1301–1582 (DSDADSDSDA…DSDSDSDSDA (282 aa)) form a 141 X 2 AA tandem repeats of D-[SAG] region. Over residues 1581–1599 (DADRDHNDKTDKPNNKELP) the composition is skewed to basic and acidic residues. The short motif at 1598–1602 (LPDTG) is the LPXTG sorting signal element. Thr-1601 carries the post-translational modification Pentaglycyl murein peptidoglycan amidated threonine. Residues 1602 to 1637 (GNDAQNNGTLFGSLFAALGGLFLVGRRRKNKNNEEK) constitute a propeptide, removed by sortase.

Its subcellular location is the secreted. It is found in the cell wall. In terms of biological role, could have a role in preventing adhesion at some stages during an infection. The polypeptide is Surface protein (pls) (Staphylococcus aureus).